The chain runs to 134 residues: Cytochrome b5 (134 aa).

Ala-2 is modified (N-acetylalanine). 3 positions are modified to N6-acetyllysine: Lys-7, Lys-10, and Lys-19. The Cytochrome b5 heme-binding domain occupies 9 to 85 (VKYYTLEEIQ…SKTFIIGELH (77 aa)). Residues His-44 and His-68 each coordinate heme. The helical transmembrane segment at 109–131 (WWTNWVIPAISALVVSLMYHFYT) threads the bilayer.

Belongs to the cytochrome b5 family.

The protein localises to the endoplasmic reticulum membrane. It localises to the microsome membrane. The protein resides in the cytoplasm. Its function is as follows. Cytochrome b5 is a membrane-bound hemoprotein functioning as an electron carrier for several membrane-bound oxygenases. The chain is Cytochrome b5 (CYB5A) from Sus scrofa (Pig).